The primary structure comprises 485 residues: Pyruvate kinase (485 aa).

Arginine 33 lines the substrate pocket. Asparagine 35, serine 37, aspartate 67, and threonine 68 together coordinate K(+). 35 to 38 provides a ligand contact to ATP; the sequence is NFSH. Positions 74 and 155 each coordinate ATP. Mg(2+) is bound at residue glutamate 221. 3 residues coordinate substrate: glycine 244, aspartate 245, and threonine 277. A Mg(2+)-binding site is contributed by aspartate 245.

It belongs to the pyruvate kinase family. Homotetramer. Requires Mg(2+) as cofactor. K(+) is required as a cofactor.

It carries out the reaction pyruvate + ATP = phosphoenolpyruvate + ADP + H(+). The protein operates within carbohydrate degradation; glycolysis; pyruvate from D-glyceraldehyde 3-phosphate: step 5/5. The chain is Pyruvate kinase (pyk) from Chlamydia trachomatis serovar D (strain ATCC VR-885 / DSM 19411 / UW-3/Cx).